A 669-amino-acid polypeptide reads, in one-letter code: uncharacterized protein (669 aa).

Helical transmembrane passes span 9–29 (PLVIGVTLFFILLLMAMIFIA), 48–68 (FSWFYVLTFSVFLGFLLILSV), 87–107 (FLSWLAMLFAAGMGVGLMFFG), 139–159 (WGIHAWAVYGTIALALAYFGF), 186–206 (AIDVMALLATLFGIITTLGFG), 224–244 (SFALQVGVIVVVMCLAVFSAI), 259–279 (LTLAFCLLLFVLISGPTLYLL), 314–334 (WTVLYWAWWCSWAPFVGLFIA), 345–365 (FIFGVLVIPSLFGILWFTVFG), 397–417 (YLPLPTITGFVSLLVILLFFI), 444–464 (AIMWGTLMSVVAIVLMQSGGL), and 470–490 (MTLIVALPFALLMLVMCFSLW).

This sequence belongs to the BCCT transporter (TC 2.A.15) family.

It is found in the cell inner membrane. This is an uncharacterized protein from Haemophilus influenzae (strain ATCC 51907 / DSM 11121 / KW20 / Rd).